The following is a 249-amino-acid chain: Structural protein VP10 (249 aa).

It localises to the virion. In terms of biological role, forms the virion spike 'foot' and helps anchor the VP9 spike 'head' protein in the virion. The sequence is that of Structural protein VP10 (Segment-10) from Banna virus (BAV).